Here is a 53-residue protein sequence, read N- to C-terminus: Mannose/glucose-specific lectin alpha 1 chain (53 aa).

This sequence belongs to the leguminous lectin family. In terms of assembly, tetramer of two alpha and two beta chains.

The polypeptide is Mannose/glucose-specific lectin alpha 1 chain (Lathyrus ochrus (Cyprus-vetch)).